Here is a 62-residue protein sequence, read N- to C-terminus: DNA-directed RNA polymerase subunit Rpo10 (62 aa).

Zn(2+) contacts are provided by C6, C9, C43, and C44.

This sequence belongs to the archaeal Rpo10/eukaryotic RPB10 RNA polymerase subunit family. Part of the RNA polymerase complex. Zn(2+) serves as cofactor.

The protein resides in the cytoplasm. The catalysed reaction is RNA(n) + a ribonucleoside 5'-triphosphate = RNA(n+1) + diphosphate. In terms of biological role, DNA-dependent RNA polymerase (RNAP) catalyzes the transcription of DNA into RNA using the four ribonucleoside triphosphates as substrates. This Methanosarcina barkeri (strain Fusaro / DSM 804) protein is DNA-directed RNA polymerase subunit Rpo10.